A 106-amino-acid polypeptide reads, in one-letter code: MKTLSLFFTLVILISSCVSNLMAKHDSERKAPFSNHGMRLQHPPYLHFQSYRGHFIPEECTELCPQRCLRRHRLMVSCIPQHFCRCSSFQLSPPHIATSPKQYSKK.

The signal sequence occupies residues 1–23 (MKTLSLFFTLVILISSCVSNLMA). 3 cysteine pairs are disulfide-bonded: cysteine 60–cysteine 78, cysteine 64–cysteine 84, and cysteine 68–cysteine 86.

The protein belongs to the DEFL family.

It localises to the secreted. This Arabidopsis thaliana (Mouse-ear cress) protein is Putative defensin-like protein 224.